The primary structure comprises 290 residues: ATP synthase gamma chain (290 aa).

It belongs to the ATPase gamma chain family. F-type ATPases have 2 components, CF(1) - the catalytic core - and CF(0) - the membrane proton channel. CF(1) has five subunits: alpha(3), beta(3), gamma(1), delta(1), epsilon(1). CF(0) has three main subunits: a, b and c.

Its subcellular location is the cell inner membrane. Its function is as follows. Produces ATP from ADP in the presence of a proton gradient across the membrane. The gamma chain is believed to be important in regulating ATPase activity and the flow of protons through the CF(0) complex. The sequence is that of ATP synthase gamma chain from Erythrobacter litoralis (strain HTCC2594).